The following is a 206-amino-acid chain: Dephospho-CoA kinase (206 aa).

In terms of domain architecture, DPCK spans T4 to F200. G12–T17 serves as a coordination point for ATP.

The protein belongs to the CoaE family.

It is found in the cytoplasm. It carries out the reaction 3'-dephospho-CoA + ATP = ADP + CoA + H(+). The protein operates within cofactor biosynthesis; coenzyme A biosynthesis; CoA from (R)-pantothenate: step 5/5. In terms of biological role, catalyzes the phosphorylation of the 3'-hydroxyl group of dephosphocoenzyme A to form coenzyme A. This chain is Dephospho-CoA kinase, found in Salmonella choleraesuis (strain SC-B67).